The sequence spans 952 residues: ALS2 C-terminal-like protein (952 aa).

MORN repeat units follow at residues 358-380 (YDGE…DGRN), 381-403 (HVGT…QASE), 409-431 (YKCH…TDEV), 432-454 (YKGY…PQAP), 459-481 (YTGH…DRGE), 483-505 (YIGM…AGVC), 506-528 (YQGT…DDSL), and 529-552 (YEGT…NGFT). The VPS9 domain occupies 795-941 (LFPDTKLLEF…IQKEDMRPHH (147 aa)).

In terms of assembly, homodimer. Forms a heteromeric complex with ALS2. Interacts with ALS2 and RAB5A. In terms of tissue distribution, expressed in heart, lung, liver and kidney.

The protein localises to the cytoplasm. Functionally, acts as a guanine nucleotide exchange factor (GEF) for Rab5 GTPase. Regulates the ALS2-mediated endosome dynamics. The protein is ALS2 C-terminal-like protein (Als2cl) of Mus musculus (Mouse).